Reading from the N-terminus, the 390-residue chain is Transforming growth factor beta-1 proprotein (390 aa).

The signal sequence occupies residues 1 to 29 (MPPSGLRLLPLLLPLLWLLVLTPGRPAAG). Positions 30 to 74 (LSTCKTIDMELVKRKRIEAIRGQILSKLRLASPPSQGEVPPGPLP) are straightjacket domain. The arm domain stretch occupies residues 75-271 (EAVLALYNST…ATPLERAQHL (197 aa)). N-linked (GlcNAc...) asparagine glycosylation is found at Asn-82, Asn-136, and Asn-176. The segment at 226–252 (DSRDNTLQVDINGLSSSRRGDLATIHG) is bowtie tail. Positions 244–246 (RGD) match the Cell attachment site motif. Intrachain disulfides connect Cys-285–Cys-294, Cys-293–Cys-356, Cys-322–Cys-387, and Cys-326–Cys-389.

This sequence belongs to the TGF-beta family. In terms of assembly, homodimer; disulfide-linked. Interacts with the serine proteases, HTRA1 and HTRA3: the interaction with either inhibits TGFB1-mediated signaling and the HTRA protease activity is required for this inhibition. May interact with THSD4; this interaction may lead to sequestration by FBN1 microfibril assembly and attenuation of TGFB signaling. Interacts with CD109, DPT and ASPN. Interacts with EFEMP2. Interacts with TSKU; the interaction contributes to regulation of the hair cycle. Interacts with TGFBR3. Homodimer; disulfide-linked. Interacts with transforming growth factor beta-1 (TGF-beta-1) chain; interaction is non-covalent and maintains TGF-beta-1 in a latent state; each latency-associated peptide (LAP) monomer interacts with TGF-beta-1 in the other monomer. Interacts with LTBP1; leading to regulation of TGF-beta-1 activation. Interacts with LRRC32/GARP; leading to regulation of TGF-beta-1 activation on the surface of activated regulatory T-cells (Tregs). Interacts with LRRC33/NRROS; leading to regulation of TGF-beta-1 activation in macrophages and microglia. Interacts (via cell attachment site) with integrins ITGAV and ITGB6 (ITGAV:ITGB6), leading to release of the active TGF-beta-1. Interacts with NREP; the interaction results in a decrease in TGFB1 autoinduction. Interacts with HSP90AB1; inhibits latent TGFB1 activation. As to quaternary structure, homodimer; disulfide-linked. Interacts with TGF-beta receptors (TGFBR1 and TGFBR2), leading to signal transduction. Transforming growth factor beta-1 proprotein: The precursor proprotein is cleaved in the Golgi apparatus by FURIN to form Transforming growth factor beta-1 (TGF-beta-1) and Latency-associated peptide (LAP) chains, which remain non-covalently linked, rendering TGF-beta-1 inactive. Post-translationally, N-glycosylated. Deglycosylation leads to activation of Transforming growth factor beta-1 (TGF-beta-1); mechanisms triggering deglycosylation-driven activation of TGF-beta-1 are however unclear.

It is found in the secreted. Its subcellular location is the extracellular space. It localises to the extracellular matrix. Its function is as follows. Transforming growth factor beta-1 proprotein: Precursor of the Latency-associated peptide (LAP) and Transforming growth factor beta-1 (TGF-beta-1) chains, which constitute the regulatory and active subunit of TGF-beta-1, respectively. Functionally, required to maintain the Transforming growth factor beta-1 (TGF-beta-1) chain in a latent state during storage in extracellular matrix. Associates non-covalently with TGF-beta-1 and regulates its activation via interaction with 'milieu molecules', such as LTBP1, LRRC32/GARP and LRRC33/NRROS, that control activation of TGF-beta-1. Interaction with LRRC33/NRROS regulates activation of TGF-beta-1 in macrophages and microglia. Interaction with LRRC32/GARP controls activation of TGF-beta-1 on the surface of activated regulatory T-cells (Tregs). Interaction with integrins (ITGAV:ITGB6 or ITGAV:ITGB8) results in distortion of the Latency-associated peptide chain and subsequent release of the active TGF-beta-1. Multifunctional protein that regulates the growth and differentiation of various cell types and is involved in various processes, such as normal development, immune function, microglia function and responses to neurodegeneration. Activation into mature form follows different steps: following cleavage of the proprotein in the Golgi apparatus, Latency-associated peptide (LAP) and Transforming growth factor beta-1 (TGF-beta-1) chains remain non-covalently linked rendering TGF-beta-1 inactive during storage in extracellular matrix. At the same time, LAP chain interacts with 'milieu molecules', such as LTBP1, LRRC32/GARP and LRRC33/NRROS that control activation of TGF-beta-1 and maintain it in a latent state during storage in extracellular milieus. TGF-beta-1 is released from LAP by integrins (ITGAV:ITGB6 or ITGAV:ITGB8): integrin-binding to LAP stabilizes an alternative conformation of the LAP bowtie tail and results in distortion of the LAP chain and subsequent release of the active TGF-beta-1. Once activated following release of LAP, TGF-beta-1 acts by binding to TGF-beta receptors (TGFBR1 and TGFBR2), which transduce signal. While expressed by many cells types, TGF-beta-1 only has a very localized range of action within cell environment thanks to fine regulation of its activation by Latency-associated peptide chain (LAP) and 'milieu molecules'. Plays an important role in bone remodeling: acts as a potent stimulator of osteoblastic bone formation, causing chemotaxis, proliferation and differentiation in committed osteoblasts. Can promote either T-helper 17 cells (Th17) or regulatory T-cells (Treg) lineage differentiation in a concentration-dependent manner. At high concentrations, leads to FOXP3-mediated suppression of RORC and down-regulation of IL-17 expression, favoring Treg cell development. At low concentrations in concert with IL-6 and IL-21, leads to expression of the IL-17 and IL-23 receptors, favoring differentiation to Th17 cells. Stimulates sustained production of collagen through the activation of CREB3L1 by regulated intramembrane proteolysis (RIP). Mediates SMAD2/3 activation by inducing its phosphorylation and subsequent translocation to the nucleus. Positively regulates odontoblastic differentiation in dental papilla cells, via promotion of IPO7-mediated translocation of phosphorylated SMAD2 to the nucleus and subsequent transcription of target genes. Can induce epithelial-to-mesenchymal transition (EMT) and cell migration in various cell types. This chain is Transforming growth factor beta-1 proprotein (TGFB1), found in Mustela putorius furo (European domestic ferret).